The chain runs to 486 residues: Vesicular GABA transporter (486 aa).

The Cytoplasmic portion of the chain corresponds to 1-93; sequence MASNRFQNLQ…EASEPISALQ (93 aa). The segment covering 29–46 has biased composition (polar residues); it reads LNEVPSYQNQPQTGESGS. The segment at 29-85 is disordered; sequence LNEVPSYQNQPQTGESGSNPPPHDRLEPIQESVVSEQPQKDDINKQEEAKDDGHGEA. Positions 66-85 are enriched in basic and acidic residues; it reads PQKDDINKQEEAKDDGHGEA. Residues 94 to 114 traverse the membrane as a helical segment; sequence AAWNVTNAIQGMFIVGLPIAV. Residues 115–119 lie on the Lumenal, vesicle side of the membrane; sequence KVGGW. A helical membrane pass occupies residues 120-140; it reads WSIGAMVGVAYVCYWTGVLLI. Over 141 to 167 the chain is Cytoplasmic; that stretch reads ECLYENGVKKRKTYREIADFYKPGFGK. A helical transmembrane segment spans residues 168–188; sequence WVLAAQLTELLSTCIIYLVLA. At 189–203 the chain is on the lumenal, vesicle side; sequence ADLLQSCFPSVDKAG. The chain crosses the membrane as a helical span at residues 204–224; sequence WMMITSASLLTCSFLDDLQIV. The Cytoplasmic segment spans residues 225-228; that stretch reads SRLS. Residues 229 to 249 traverse the membrane as a helical segment; that stretch reads FFNAISHLIVNLIMVLYCLSF. Residues 250-263 are Lumenal, vesicle-facing; that stretch reads VSQWSFSTITFSLN. Residues 264–284 form a helical membrane-spanning segment; sequence INTLPTIVGMVVFGYTSHIFL. At 285–305 the chain is on the cytoplasmic side; sequence PNLEGNMKNPAQFNVMLKWSH. The chain crosses the membrane as a helical span at residues 306 to 326; that stretch reads IAAAVFKVVFGMLGFLTFGEL. Residues 327–341 are Lumenal, vesicle-facing; it reads TQEEISNSLPNQSFK. An N-linked (GlcNAc...) asparagine glycan is attached at Asn-337. Residues 342 to 362 form a helical membrane-spanning segment; it reads ILVNLILVVKALLSYPLPFYA. Over 363-398 the chain is Cytoplasmic; it reads AVQLLKNNLFLGYPQTPFTSCYSPDKSLREWAVTLR. The chain crosses the membrane as a helical span at residues 399 to 419; the sequence is IILVLFTLFVALSVPYLVELM. Residues 420 to 421 lie on the Lumenal, vesicle side of the membrane; the sequence is GL. Residues 422 to 442 traverse the membrane as a helical segment; sequence VGNITGTMLSFIWPALFHLYI. The Cytoplasmic segment spans residues 443–457; the sequence is KEKTLNNFEKRFDQG. The chain crosses the membrane as a helical span at residues 458-478; sequence IIIMGCSVCISGVYFSSMELL. The Lumenal, vesicle portion of the chain corresponds to 479–486; that stretch reads RAINSADS.

The protein belongs to the amino acid/polyamine transporter 2 family.

It is found in the cytoplasmic vesicle membrane. Its function is as follows. Involved in the uptake of GABA into the synaptic vesicles. The chain is Vesicular GABA transporter (unc-47) from Caenorhabditis elegans.